A 333-amino-acid chain; its full sequence is L-lactate dehydrogenase B chain (333 aa).

NAD(+) contacts are provided by residues 29 to 57 (GQVGMACAISILGKGLCDELALVDVWEDK) and Arg-99. The substrate site is built by Arg-106, Asn-138, and Arg-169. Asn-138 contacts NAD(+). The active-site Proton acceptor is His-193. Residue Thr-248 coordinates substrate.

This sequence belongs to the LDH/MDH superfamily. LDH family. As to quaternary structure, homotetramer.

It localises to the cytoplasm. The enzyme catalyses (S)-lactate + NAD(+) = pyruvate + NADH + H(+). Its pathway is fermentation; pyruvate fermentation to lactate; (S)-lactate from pyruvate: step 1/1. In terms of biological role, interconverts simultaneously and stereospecifically pyruvate and lactate with concomitant interconversion of NADH and NAD(+). In Trachemys scripta elegans (Red-eared slider turtle), this protein is L-lactate dehydrogenase B chain (LDHB).